The chain runs to 381 residues: 3-dehydroquinate synthase (381 aa).

Residues 81–86 (EGESSK), 115–119 (GVIGD), 139–140 (TS), Lys-152, and Lys-161 contribute to the NAD(+) site. Glu-194, His-256, and His-274 together coordinate Zn(2+).

This sequence belongs to the sugar phosphate cyclases superfamily. Dehydroquinate synthase family. Co(2+) serves as cofactor. Requires Zn(2+) as cofactor. It depends on NAD(+) as a cofactor.

It localises to the cytoplasm. The catalysed reaction is 7-phospho-2-dehydro-3-deoxy-D-arabino-heptonate = 3-dehydroquinate + phosphate. The protein operates within metabolic intermediate biosynthesis; chorismate biosynthesis; chorismate from D-erythrose 4-phosphate and phosphoenolpyruvate: step 2/7. Catalyzes the conversion of 3-deoxy-D-arabino-heptulosonate 7-phosphate (DAHP) to dehydroquinate (DHQ). In Rhodopseudomonas palustris (strain ATCC BAA-98 / CGA009), this protein is 3-dehydroquinate synthase.